A 69-amino-acid polypeptide reads, in one-letter code: Putative membrane protein insertion efficiency factor (69 aa).

This sequence belongs to the UPF0161 family.

Its subcellular location is the cell membrane. Its function is as follows. Could be involved in insertion of integral membrane proteins into the membrane. In Thermomicrobium roseum (strain ATCC 27502 / DSM 5159 / P-2), this protein is Putative membrane protein insertion efficiency factor.